The chain runs to 297 residues: Probable endonuclease 4 (297 aa).

Zn(2+) is bound by residues His69, His110, Glu145, Asp179, His182, His214, Asp227, His229, and Glu259.

It belongs to the AP endonuclease 2 family. The cofactor is Zn(2+).

It catalyses the reaction Endonucleolytic cleavage to 5'-phosphooligonucleotide end-products.. Functionally, endonuclease IV plays a role in DNA repair. It cleaves phosphodiester bonds at apurinic or apyrimidinic (AP) sites, generating a 3'-hydroxyl group and a 5'-terminal sugar phosphate. This is Probable endonuclease 4 from Bacillus velezensis (strain DSM 23117 / BGSC 10A6 / LMG 26770 / FZB42) (Bacillus amyloliquefaciens subsp. plantarum).